A 486-amino-acid polypeptide reads, in one-letter code: Betaine aldehyde dehydrogenase (486 aa).

2 residues coordinate K(+): Thr23 and Asp90. 147-149 (GAW) contributes to the NAD(+) binding site. Lys159 serves as the catalytic Charge relay system. NAD(+) is bound by residues 173 to 176 (KPSE) and 226 to 229 (ESGT). Leu241 is a binding site for K(+). The Proton acceptor role is filled by Glu247. NAD(+)-binding residues include Gly249, Cys281, and Glu382. Residue Cys281 is the Nucleophile of the active site. A Cysteine sulfenic acid (-SOH) modification is found at Cys281. K(+)-binding residues include Lys452 and Gly455. The active-site Charge relay system is the Glu459.

Belongs to the aldehyde dehydrogenase family. Dimer of dimers. K(+) is required as a cofactor.

It carries out the reaction betaine aldehyde + NAD(+) + H2O = glycine betaine + NADH + 2 H(+). It participates in amine and polyamine biosynthesis; betaine biosynthesis via choline pathway; betaine from betaine aldehyde: step 1/1. Functionally, involved in the biosynthesis of the osmoprotectant glycine betaine. Catalyzes the irreversible oxidation of betaine aldehyde to the corresponding acid. The sequence is that of Betaine aldehyde dehydrogenase from Vibrio vulnificus (strain CMCP6).